The sequence spans 609 residues: GDP-Man:Man(3)GlcNAc(2)-PP-Dol alpha-1,2-mannosyltransferase (609 aa).

Met1 is a topological domain (lumenal). The chain crosses the membrane as a helical span at residues 2-22 (YLILLVVLAVYVTYKLITTVL). Over 23 to 195 (PHHLLIPSQN…NLIDGNYWKH (173 aa)) the chain is Cytoplasmic. An intramembrane region (helical) is located at residues 196–216 (FTLIGQLFGGILLSLEAMYEL). Residues 217 to 455 (SPDVWIDTMG…FGLNAMWNEH (239 aa)) are Cytoplasmic-facing. The helical intramembrane region spans 456–476 (FGIGVVEYMARGCTPIVHASA). Residues 477 to 609 (GPLLDMIGRN…EKRTKVEQVY (133 aa)) are Cytoplasmic-facing.

This sequence belongs to the glycosyltransferase group 1 family.

The protein localises to the endoplasmic reticulum membrane. It catalyses the reaction an alpha-D-Man-(1-&gt;3)-[alpha-D-Man-(1-&gt;6)]-beta-D-Man-(1-&gt;4)-beta-D-GlcNAc-(1-&gt;4)-alpha-D-GlcNAc-diphospho-di-trans,poly-cis-dolichol + 2 GDP-alpha-D-mannose = an alpha-D-Man-(1-&gt;2)-alpha-D-Man-(1-&gt;2)-alpha-D-Man-(1-&gt;3)-[alpha-D-Man-(1-&gt;6)]-beta-D-Man-(1-&gt;4)-beta-D-GlcNAc-(1-&gt;4)-alpha-D-GlcNAc-diphospho-di-trans,poly-cis-dolichol + 2 GDP + 2 H(+). It functions in the pathway protein modification; protein glycosylation. Its function is as follows. GDP-Man:Man(3)GlcNAc(2)-PP-Dol alpha-1,2-mannosyltransferase that operates in the biosynthetic pathway of dolichol-linked oligosaccharides, the glycan precursors employed in protein asparagine (N)-glycosylation. The assembly of dolichol-linked oligosaccharides begins on the cytosolic side of the endoplasmic reticulum membrane and finishes in its lumen. The sequential addition of sugars to dolichol pyrophosphate produces dolichol-linked oligosaccharides containing fourteen sugars, including two GlcNAcs, nine mannoses and three glucoses. Once assembled, the oligosaccharide is transferred from the lipid to nascent proteins by oligosaccharyltransferases. Catalyzes, on the cytoplasmic face of the endoplasmic reticulum, the addition of the fourth and fifth mannose residues to the dolichol-linked oligosaccharide chain, to produce Man(5)GlcNAc(2)-PP-dolichol core oligosaccharide. The polypeptide is GDP-Man:Man(3)GlcNAc(2)-PP-Dol alpha-1,2-mannosyltransferase (ALG11) (Candida albicans (strain SC5314 / ATCC MYA-2876) (Yeast)).